A 487-amino-acid polypeptide reads, in one-letter code: Cytochrome P450 716A75 (487 aa).

A helical transmembrane segment spans residues 5-25 (FVSLLSLFLLILLPLSLLFLF). Cys-434 contributes to the heme binding site.

Belongs to the cytochrome P450 family. Requires heme as cofactor.

The protein resides in the membrane. The catalysed reaction is beta-amyrin + reduced [NADPH--hemoprotein reductase] + O2 = erythrodiol + oxidized [NADPH--hemoprotein reductase] + H2O + H(+). The enzyme catalyses erythrodiol + reduced [NADPH--hemoprotein reductase] + O2 = oleanolic aldehyde + oxidized [NADPH--hemoprotein reductase] + 2 H2O + H(+). It carries out the reaction oleanolic aldehyde + reduced [NADPH--hemoprotein reductase] + O2 = oleanolate + oxidized [NADPH--hemoprotein reductase] + H2O + 2 H(+). Catalyzes the C-28 oxidation of beta-amyrin to form erythrodiol. Catalyzes the C-28 oxidation of erythrodiol to form oleanolic aldehyde. Catalyzes the C-28 oxidation of oleanolic aldehyde to form oleanolate. The protein is Cytochrome P450 716A75 of Maesa lanceolata (False assegai).